The sequence spans 409 residues: Putative protein disulfide-isomerase DDB_G0275025 (409 aa).

An N-terminal signal peptide occupies residues 1–21 (MKLINICIFIFAIICIESTFG). Positions 28–140 (NVINLTKKNF…AKFSLAKLPS (113 aa)) constitute a Thioredoxin domain. Cysteines 57 and 60 form a disulfide. Residues 245–273 (SNNDNNNNNNNNNNEESTKTTTTEKDPAS) form a disordered region. Over residues 247–259 (NDNNNNNNNNNNE) the composition is skewed to low complexity. Residues 260–273 (ESTKTTTTEKDPAS) show a composition bias toward basic and acidic residues. The Prevents secretion from ER signature appears at 406–409 (KDEL).

This sequence belongs to the protein disulfide isomerase family.

It localises to the endoplasmic reticulum lumen. The enzyme catalyses Catalyzes the rearrangement of -S-S- bonds in proteins.. The protein is Putative protein disulfide-isomerase DDB_G0275025 of Dictyostelium discoideum (Social amoeba).